Consider the following 443-residue polypeptide: Xaa-Pro dipeptidase (443 aa).

Asp246, Asp257, His339, Glu384, and Glu423 together coordinate Mn(2+).

Belongs to the peptidase M24B family. Bacterial-type prolidase subfamily. It depends on Mn(2+) as a cofactor.

It catalyses the reaction Xaa-L-Pro dipeptide + H2O = an L-alpha-amino acid + L-proline. Functionally, splits dipeptides with a prolyl residue in the C-terminal position. This is Xaa-Pro dipeptidase from Escherichia coli O81 (strain ED1a).